The following is a 456-amino-acid chain: B-cell linker protein (456 aa).

A disordered region spans residues isoleucine 36–lysine 301. Residues proline 57–asparagine 74 are compositionally biased toward acidic residues. 5 positions are modified to phosphotyrosine; by SYK: tyrosine 72, tyrosine 84, tyrosine 96, tyrosine 178, and tyrosine 189. Positions glutamate 173 to glutamate 187 are enriched in acidic residues. Positions proline 212–glycine 226 are enriched in low complexity. Residues serine 236–leucine 245 show a composition bias toward pro residues. Over residues lysine 251–proline 260 the composition is skewed to low complexity. Over residues cysteine 271–glutamate 289 the composition is skewed to basic and acidic residues. The 108-residue stretch at tryptophan 346 to valine 453 folds into the SH2 domain.

In terms of assembly, associates with PLCG1, VAV1 and NCK1 in a B-cell antigen receptor-dependent fashion. Interacts with VAV3, PLCG2 and GRB2. Interacts through its SH2 domain with CD79A. Interacts (via SH2 domain) with SYK; phosphorylated and activated by SYK. Interacts (via SH2 domain) with SCIMP; this interaction is dependent on phosphorylation of SCIMP 'Tyr-131'. In terms of processing, following BCR activation, phosphorylated on tyrosine residues by SYK and LYN. When phosphorylated, serves as a scaffold to assemble downstream targets of antigen activation, including PLCG1, VAV1, GRB2 and NCK1. Phosphorylation of Tyr-84, Tyr-178 and Tyr-189 facilitates PLCG1 binding. Phosphorylation of Tyr-96 facilitates BTK binding. Phosphorylation of Tyr-72 facilitates VAV1 and NCK1 binding. Phosphorylation is required for both Ca(2+) and MAPK signaling pathways. As to expression, expressed in B-cell lineage and fibroblast cell lines (at protein level). Highest levels of expression in the spleen, with lower levels in the liver, kidney, pancreas, small intestines and colon.

The protein resides in the cytoplasm. It is found in the cell membrane. In terms of biological role, functions as a central linker protein, downstream of the B-cell receptor (BCR), bridging the SYK kinase to a multitude of signaling pathways and regulating biological outcomes of B-cell function and development. Plays a role in the activation of ERK/EPHB2, MAP kinase p38 and JNK. Modulates AP1 activation. Important for the activation of NF-kappa-B and NFAT. Plays an important role in BCR-mediated PLCG1 and PLCG2 activation and Ca(2+) mobilization and is required for trafficking of the BCR to late endosomes. However, does not seem to be required for pre-BCR-mediated activation of MAP kinase and phosphatidyl-inositol 3 (PI3) kinase signaling. May be required for the RAC1-JNK pathway. Plays a critical role in orchestrating the pro-B cell to pre-B cell transition. May play an important role in BCR-induced B-cell apoptosis. The chain is B-cell linker protein (BLNK) from Homo sapiens (Human).